Reading from the N-terminus, the 757-residue chain is Chloride anion exchanger (757 aa).

At 1 to 71 (MIEAIGNQYV…SWLPAYKIKE (71 aa)) the chain is on the cytoplasmic side. The chain crosses the membrane as a helical span at residues 72–92 (WLLSDIVSGISTGLVAVLQGL). A topological domain (extracellular) is located at residue Ala-93. Residues 94–114 (FALLVNIPPAYGLYAAFFPVI) traverse the membrane as a helical segment. Over 115 to 124 (TYFFLGTSRH) the chain is Cytoplasmic. Residues 125–145 (ISVGPFPVLSMMVGVVVTRVA) traverse the membrane as a helical segment. The Extracellular portion of the chain corresponds to 146-176 (SGSDTSPALSSSSAENDSMIEEKVMVAASVT). Residue Asn-161 is glycosylated (N-linked (GlcNAc...) asparagine). The chain crosses the membrane as a helical span at residues 177 to 197 (VLSGIIQLLLGVLQIGFVVIY). Over 198–201 (LSES) the chain is Cytoplasmic. Residues 202 to 222 (LISGFTTAAAIHVLVSQLKFM) form a helical membrane-spanning segment. At 223–250 (LQLTVPAHSDPFSIFKVLESVFSQIQKT) the chain is on the extracellular side. The helical transmembrane segment at 251-271 (NIADLVTSVIILVVVFVVKEI) threads the bilayer. At 272–278 (NQRYRSK) the chain is on the cytoplasmic side. Residues 279–299 (LPVPIPIELIMTVIATGISYG) form a helical membrane-spanning segment. The Extracellular segment spans residues 300–335 (CNFEQRFGVAVVGNMSLGFQPPITPSVEVFQDTIGD). The chain crosses the membrane as a helical span at residues 336–356 (CFGIAIVGFAVAFSVASVYSL). Residues 357–367 (KYDYPIDGNQE) are Cytoplasmic-facing. A helical transmembrane segment spans residues 368 to 388 (LIALGVSNIFTGAFKGFAGST). The Extracellular portion of the chain corresponds to 389–404 (ALSRSGVQESTGGKTQ). Residues 405–425 (VAGLLSAVIVLIVIVAIGFLL) form a helical membrane-spanning segment. Topologically, residues 426 to 462 (QPLQKSVLAALALGNLKGMLMQFAEIGRLWKKDKYDC) are cytoplasmic. Residues 463–483 (LIWIMTFIFAIVLGLGLGLAA) form a helical membrane-spanning segment. Residues 484 to 757 (SVAFQLLTIV…ECQVPVETKF (274 aa)) lie on the Extracellular side of the membrane. Residues 518 to 713 (NYADVYEPEG…LTIHDAILHI (196 aa)) form the STAS domain. Positions 754–757 (ETKF) match the PDZ-binding motif.

The protein belongs to the SLC26A/SulP transporter (TC 2.A.53) family. Interacts with PDZK1, CFTR, SLC26A6 and NHERF1. Interacts (via PDZ-binding motif) with NHERF4 (via the third PDZ domain); interaction leads to decreased expression of SLC26A3 on the cell membrane resulting in its reduced exchanger activity. N-glycosylation is required for efficient cell surface expression, and protection from proteolytic degradation.

It localises to the apical cell membrane. Its subcellular location is the membrane. The protein resides in the cell membrane. The enzyme catalyses hydrogencarbonate(in) + 2 chloride(out) = hydrogencarbonate(out) + 2 chloride(in). Mediates chloride-bicarbonate exchange with a chloride bicarbonate stoichiometry of 2:1 in the intestinal epithelia. Plays a role in the chloride and bicarbonate homeostasis during sperm epididymal maturation and capacitation. This chain is Chloride anion exchanger (Slc26a3), found in Rattus norvegicus (Rat).